A 774-amino-acid polypeptide reads, in one-letter code: MANKTKKPIYPFEDWVIRETQFSIDTNYRNETIFTLANGYIGMRGTFEERYSGPKNTSFNGTYINGFYEIHDIVYPEGGYGFAKIGQTMLNVADSKIIKLYVDGEEFDLLQGKILFYERVLDMKKGFVERKVKWESPTGKILEVKIKRIVSLNRQHLAAISFTMQPVNFTGKIRFVSAIDGNVSNINDSEDVRVGSNLKGKVLKTIDKSVEGLKGWIVQKTQKSNFSYACAIDNVLVADSKYEVSNSLEEDGVKVIVDLEAEKGTSYTLNKFISYYTSKDFDENKLVALALEEIEKAKNDGFETIEKEQEEFLNSFWKDADVIIEGDKALQQGIRFNEFHLLQSVGRDGKTNIAAKGLTGGGYEGHYFWDSDIYIMPFFLYTKPEIAKALVMYRYNLLDAARSRAKELGHKGALYPWRTIDGPECSAYFPAGTAQYHINADIVYALKRYVEATNDVDFLYDYGCEILFETARFWEDLGAYIPLKGNKFCINCVTGPDEYTALVDNNAYTNYMAKMNLEYAYDIANKMKKEVPQKYQKVASKLNLKDEEIVAWKKAADNMYLPYSKELDIIPQDDSFLYKERITVDEIPEDQFPLLLHWHYLNIYRYQICKQPDVLLLMFLQREKFTKDELKKNYDYYEPITTHDSSLSPAIFSILANEIGYTDKAYKYFMMTARMDLDDYNDNVKDGIHAASMAGTWSAVVNGFGGMRVYTNELHFEPRLPKEWNLLSFNVRYKGRKINVKLTKENVVFALLEGEPIEIYYFDKKILLEKGEIK.

369-370 (WD) serves as a coordination point for substrate. Glutamate 498 (proton donor) is an active-site residue. A substrate-binding site is contributed by 610 to 611 (KQ).

Belongs to the glycosyl hydrolase 65 family. In terms of assembly, homodimer.

It carries out the reaction alpha,alpha-trehalose + phosphate = beta-D-glucose 1-phosphate + D-glucose. It participates in glycan degradation; trehalose degradation. With respect to regulation, inhibited by Cu(2+), Hg(2+), Mg(2+), Mn(2+), Pb(2+) and Zn(2+). In terms of biological role, catalyzes the reversible phosphorolytic cleavage of trehalose. Phosphorolysis is specific for trehalose, but D-xylose, D-galactose, L-arabinose, D-fucose, L-fucose, D-glucosamine and 2-deoxy D-glucose can act as substitutes for D-glucose in the synthetic reaction. This chain is Alpha,alpha-trehalose phosphorylase (treP), found in Thermoanaerobacter brockii (Thermoanaerobium brockii).